The primary structure comprises 130 residues: Small ribosomal subunit protein uS8 (130 aa).

The protein belongs to the universal ribosomal protein uS8 family. In terms of assembly, part of the 30S ribosomal subunit.

Functionally, one of the primary rRNA binding proteins, it binds directly to 16S rRNA central domain where it helps coordinate assembly of the platform of the 30S subunit. This chain is Small ribosomal subunit protein uS8, found in Pyrobaculum calidifontis (strain DSM 21063 / JCM 11548 / VA1).